A 461-amino-acid polypeptide reads, in one-letter code: Phosphoglucosamine mutase (461 aa).

Catalysis depends on S113, which acts as the Phosphoserine intermediate. Mg(2+) is bound by residues S113, D251, D253, and D255. S113 carries the post-translational modification Phosphoserine.

It belongs to the phosphohexose mutase family. It depends on Mg(2+) as a cofactor. Activated by phosphorylation.

It catalyses the reaction alpha-D-glucosamine 1-phosphate = D-glucosamine 6-phosphate. Functionally, catalyzes the conversion of glucosamine-6-phosphate to glucosamine-1-phosphate. In Prochlorococcus marinus (strain SARG / CCMP1375 / SS120), this protein is Phosphoglucosamine mutase.